The following is a 379-amino-acid chain: Chaperone protein DnaJ (379 aa).

The J domain maps to 5 to 70; the sequence is DYYEVLGLSK…EKKAMYDQYG (66 aa). The CR-type zinc finger occupies 136 to 214; sequence GCKKDIRIHT…CHGDGRVHKA (79 aa). The Zn(2+) site is built by C149, C152, C166, C169, C188, C191, C202, and C205. CXXCXGXG motif repeat units lie at residues 149–156, 166–173, 188–195, and 202–209; these read CDTCHGTG, CSHCHGSG, CPSCHGTG, and CRSCHGDG.

The protein belongs to the DnaJ family. As to quaternary structure, homodimer. The cofactor is Zn(2+).

The protein resides in the cytoplasm. Participates actively in the response to hyperosmotic and heat shock by preventing the aggregation of stress-denatured proteins and by disaggregating proteins, also in an autonomous, DnaK-independent fashion. Unfolded proteins bind initially to DnaJ; upon interaction with the DnaJ-bound protein, DnaK hydrolyzes its bound ATP, resulting in the formation of a stable complex. GrpE releases ADP from DnaK; ATP binding to DnaK triggers the release of the substrate protein, thus completing the reaction cycle. Several rounds of ATP-dependent interactions between DnaJ, DnaK and GrpE are required for fully efficient folding. Also involved, together with DnaK and GrpE, in the DNA replication of plasmids through activation of initiation proteins. The chain is Chaperone protein DnaJ from Mannheimia haemolytica (Pasteurella haemolytica).